A 793-amino-acid chain; its full sequence is DNA mismatch repair protein MutS (793 aa).

Position 589–596 (589–596 (GPNMSGKS)) interacts with ATP.

This sequence belongs to the DNA mismatch repair MutS family.

This protein is involved in the repair of mismatches in DNA. It is possible that it carries out the mismatch recognition step. This protein has a weak ATPase activity. This Thermotoga petrophila (strain ATCC BAA-488 / DSM 13995 / JCM 10881 / RKU-1) protein is DNA mismatch repair protein MutS.